A 449-amino-acid chain; its full sequence is Endoglucanase A (449 aa).

Residues M1–A31 constitute a signal peptide (tat-type signal). A CBM2 domain is found at A32–T137. C35 and C134 are disulfide-bonded. The segment at F127 to P170 is disordered. The segment covering T132–T141 has biased composition (low complexity). Positions P139–P168 are linker ('hinge') (Pro-Thr box). Residues S142–T167 are compositionally biased toward pro residues. The active site involves D247. 2 disulfide bridges follow: C248/C291 and C390/C426. D283 functions as the Proton donor in the catalytic mechanism. D423 acts as the Nucleophile in catalysis. A catalytic region spans residues E438–W449.

Belongs to the glycosyl hydrolase 6 (cellulase B) family. In terms of processing, the linker region (also termed 'hinge') may be a potential site for proteolysis. Predicted to be exported by the Tat system. The position of the signal peptide cleavage has not been experimentally proven.

The enzyme catalyses Endohydrolysis of (1-&gt;4)-beta-D-glucosidic linkages in cellulose, lichenin and cereal beta-D-glucans.. The biological conversion of cellulose to glucose generally requires three types of hydrolytic enzymes: (1) Endoglucanases which cut internal beta-1,4-glucosidic bonds; (2) Exocellobiohydrolases that cut the disaccharide cellobiose from the non-reducing end of the cellulose polymer chain; (3) Beta-1,4-glucosidases which hydrolyze the cellobiose and other short cello-oligosaccharides to glucose. The polypeptide is Endoglucanase A (cenA) (Cellulomonas fimi).